Here is a 1020-residue protein sequence, read N- to C-terminus: MLISKTVLSGLALGASFVGVSAQQNSTRWPLHDNGLTDTVEWDHYSFLINGQRHFVFSGEFHYWRIPVPELWRDLLEKIKAAGFTAFSIYNHWGYHSPKPGVLDFENGAHNFTSIMTLAKEIGLYMIIRPGPYVNAEANAGGLPLWTTTGAYGKLRDNDPRYLEALTPYWANISKIIAPHLITNGGNVILYQIENEYAEQWLDEETHEPNTSGQEYMQYLEDVARENGIDAPLIHNLPNMNGHSWSKDLSNATGNVDVIGVDSYPTCWTCNVSECASTNGEYIPYKTLIYYDYFKELSPTQPSFMPEFQGGSYNPWGGPQGGCPDDLGPDFANLFYRNLISQRVSAISLYMLYGGTNWGWHASTDVATSYDYSSPISENRKLIEKYYETKVLTQFTKIAQDLSKVDRLGNSTKYSSNPAVSVAELRNPDTGAAFYVTQHEYTPSGTVEKFTVKVNTSEGALTIPQYGSQITLNGHQSKIIVTDFKFGSKTLLYSTAEVLTYAVIDGKEVLALWVPTGESGEFTVKGVNSAKFADKGRTANIEIHPGANNVTVSFMQRSGMSLVELGDGTRIVLLDRSAAHVFWSTPLNNDPAEAGNNTVLVHGPYLVRSAKLEGCDLKLTGDIQNSTEVSIFAPKSVCSVNWNGKKTSVKSAKGGVITTTLGGDAKFELPTISGWKSADSLPEIAKDYSATSKAWVVATKTNSSNPTPPAPNNPVLYVDENDIHVGNHIYRATFPSTDEPPTDVYLNITGGRAFSYSVWLNSDFIGSWLGTATTEQNDQTFSFSNATLSTDEDNILVVVMDNSAHDLRDGALNPRGITNATLIGPGSYSFTEWKLAGNAGFEDHLDPVRAPLNEGSLYAERVGIHLPGYEFDEAEEVSSNSTSLTVPGAGIRVFRTVVPLSVPQGLDVSISFRLTAPSNVTFTSAEGYTNQLRALLFVNGYQYGRFNPYIGHQIDFPVPPGVLDYNGDNTIAVTVWSQSVDGAEIKVDWNVDYVHETSFDMNFDGAYLRPGWIEERREYA.

A signal peptide spans 1–22; that stretch reads MLISKTVLSGLALGASFVGVSA. Residue Asn25 is glycosylated (N-linked (GlcNAc...) asparagine). Tyr90 lines the substrate pocket. Residue Asn111 is glycosylated (N-linked (GlcNAc...) asparagine). Residues Asn135, Ala136, and Glu137 each contribute to the substrate site. A glycan (N-linked (GlcNAc...) asparagine) is linked at Asn172. Residue Asn195 coordinates substrate. Glu196 (proton donor) is an active-site residue. 2 N-linked (GlcNAc...) asparagine glycosylation sites follow: Asn210 and Asn251. Substrate is bound at residue Tyr264. The cysteines at positions 270 and 323 are disulfide-linked. Asn271 carries N-linked (GlcNAc...) asparagine glycosylation. The Nucleophile role is filled by Glu307. Tyr372 is a substrate binding site. N-linked (GlcNAc...) asparagine glycosylation is found at Asn410, Asn455, Asn549, Asn596, Asn625, Asn702, Asn747, Asn785, Asn819, Asn880, and Asn919.

This sequence belongs to the glycosyl hydrolase 35 family.

It localises to the secreted. The enzyme catalyses Hydrolysis of terminal non-reducing beta-D-galactose residues in beta-D-galactosides.. In terms of biological role, cleaves beta-linked terminal galactosyl residues from gangliosides, glycoproteins, and glycosaminoglycans. This Aspergillus flavus (strain ATCC 200026 / FGSC A1120 / IAM 13836 / NRRL 3357 / JCM 12722 / SRRC 167) protein is Probable beta-galactosidase B (lacB).